We begin with the raw amino-acid sequence, 159 residues long: Cyclic pyranopterin monophosphate synthase (159 aa).

Substrate is bound by residues 75–77 (MCH) and 113–114 (ME). Asp128 is a catalytic residue.

It belongs to the MoaC family. Homohexamer; trimer of dimers.

It catalyses the reaction (8S)-3',8-cyclo-7,8-dihydroguanosine 5'-triphosphate = cyclic pyranopterin phosphate + diphosphate. The protein operates within cofactor biosynthesis; molybdopterin biosynthesis. Functionally, catalyzes the conversion of (8S)-3',8-cyclo-7,8-dihydroguanosine 5'-triphosphate to cyclic pyranopterin monophosphate (cPMP). In Desulfatibacillum aliphaticivorans, this protein is Cyclic pyranopterin monophosphate synthase.